Reading from the N-terminus, the 606-residue chain is MGGCTSKPSTSSGRPNPFAPGNDYPQIDDFAPDHPGKSPIPTPSAAKASPFFPFYTPSPARHRRNKSRDVGGGGESKSLTSTPLRQLRRAFHPPSPAKHIRAALRRRKGKKEAALSGVTQLTTEVPQREEEEEVGLDKRFGFSKEFHSRVELGEEIGRGHFGYTCSAKFKKGELKGQVVAVKIIPKSKMTTAIAIEDVRREVKILQALSGHKNLVQFYDAFEDNANVYIAMELCEGGELLDRILARGGKYSENDAKPVIIQILNVVAFCHFQGVVHRDLKPENFLYTSKEENSQLKAIDFGLSDFVRPDERLNDIVGSAYYVAPEVLHRSYTTEADVWSIGVIAYILLCGSRPFWARTESGIFRAVLKADPSFDEPPWPFLSSDAKDFVKRLLFKDPRRRMSASQALMHPWIRAYNTDMNIPFDILIFRQMKAYLRSSSLRKAALRALSKTLIKDEILYLKTQFSLLAPNKDGLITMDTIRMALASNATEAMKESRIPEFLALLNGLQYRGMDFEEFCAAAINVHQHESLDCWEQSIRHAYELFDKNGNRAIVIEELASELGVGPSIPVHSVLHDWIRHTDGKLSFFGFVKLLHGVSVRASGKTTR.

The span at 1-14 shows a compositional bias: polar residues; the sequence is MGGCTSKPSTSSGR. A disordered region spans residues 1–132; sequence MGGCTSKPST…TEVPQREEEE (132 aa). Glycine 2 is lipidated: N-myristoyl glycine. The span at 98–110 shows a compositional bias: basic residues; sequence KHIRAALRRRKGK. The Protein kinase domain occupies 150 to 412; sequence VELGEEIGRG…ASQALMHPWI (263 aa). ATP is bound by residues 156-164 and lysine 182; that span reads IGRGHFGYT. Aspartate 278 (proton acceptor) is an active-site residue. A Phosphoserine modification is found at serine 318. The interval 418–448 is autoinhibitory domain; it reads DMNIPFDILIFRQMKAYLRSSSLRKAALRAL. Residues 437 to 457 are calmodulin binding (CaMBD); the sequence is SSSLRKAALRALSKTLIKDEI. EF-hand domains are found at residues 455 to 491, 492 to 527, 528 to 567, and 570 to 599; these read DEIL…ATEA, MKES…VHQH, ESLD…GPSI, and HSVL…VSVR. Ca(2+) is bound by residues asparagine 470, aspartate 472, glutamate 516, aspartate 545, asparagine 547, asparagine 549, glutamate 556, aspartate 581, and lysine 583. At serine 585 the chain carries Phosphoserine.

Belongs to the protein kinase superfamily. Ser/Thr protein kinase family. CDPK subfamily. In terms of assembly, binds calmodulin (CaM) in a calcium-dependent manner. Post-translationally, autophosphorylated.

Its subcellular location is the membrane. It carries out the reaction L-seryl-[protein] + ATP = O-phospho-L-seryl-[protein] + ADP + H(+). The catalysed reaction is L-threonyl-[protein] + ATP = O-phospho-L-threonyl-[protein] + ADP + H(+). With respect to regulation, activated by calcium and calmodulin. Autophosphorylation may play an important role in the regulation of the kinase activity. Its function is as follows. May play a role in signal transduction pathways that involve calcium as a second messenger. In Arabidopsis thaliana (Mouse-ear cress), this protein is CDPK-related kinase 8 (CRK8).